Here is a 380-residue protein sequence, read N- to C-terminus: Cytochrome b (380 aa).

The next 4 membrane-spanning stretches (helical) occupy residues 34–54 (FGSL…FLAM), 78–99 (WLLR…YMHI), 114–134 (WNIG…GYVL), and 179–199 (FFAF…VHLL). Residues His-84 and His-98 each coordinate heme b. The heme b site is built by His-183 and His-197. Residue His-202 participates in a ubiquinone binding. The next 4 membrane-spanning stretches (helical) occupy residues 227 to 247 (YKDV…ALFS), 289 to 309 (LGGV…PFVH), 321 to 341 (LAQV…WLGG), and 348 to 368 (YIFL…LLIP).

This sequence belongs to the cytochrome b family. As to quaternary structure, the cytochrome bc1 complex contains 3 respiratory subunits (MT-CYB, CYC1 and UQCRFS1), 2 core proteins (UQCRC1 and UQCRC2) and probably 6 low-molecular weight proteins. Heme b serves as cofactor.

It localises to the mitochondrion inner membrane. Its function is as follows. Component of the ubiquinol-cytochrome c reductase complex (complex III or cytochrome b-c1 complex) that is part of the mitochondrial respiratory chain. The b-c1 complex mediates electron transfer from ubiquinol to cytochrome c. Contributes to the generation of a proton gradient across the mitochondrial membrane that is then used for ATP synthesis. This chain is Cytochrome b (MT-CYB), found in Branchiostoma floridae (Florida lancelet).